A 279-amino-acid polypeptide reads, in one-letter code: Probable endonuclease 4 (279 aa).

Residues histidine 69, histidine 109, glutamate 145, aspartate 179, histidine 182, histidine 216, aspartate 229, histidine 231, and glutamate 261 each contribute to the Zn(2+) site.

Belongs to the AP endonuclease 2 family. The cofactor is Zn(2+).

The enzyme catalyses Endonucleolytic cleavage to 5'-phosphooligonucleotide end-products.. Functionally, endonuclease IV plays a role in DNA repair. It cleaves phosphodiester bonds at apurinic or apyrimidinic (AP) sites, generating a 3'-hydroxyl group and a 5'-terminal sugar phosphate. The sequence is that of Probable endonuclease 4 from Buchnera aphidicola subsp. Schizaphis graminum (strain Sg).